Reading from the N-terminus, the 98-residue chain is Co-chaperonin GroES (98 aa).

Belongs to the GroES chaperonin family. Heptamer of 7 subunits arranged in a ring. Interacts with the chaperonin GroEL.

The protein resides in the cytoplasm. Its function is as follows. Together with the chaperonin GroEL, plays an essential role in assisting protein folding. The GroEL-GroES system forms a nano-cage that allows encapsulation of the non-native substrate proteins and provides a physical environment optimized to promote and accelerate protein folding. GroES binds to the apical surface of the GroEL ring, thereby capping the opening of the GroEL channel. The chain is Co-chaperonin GroES from Allorhizobium ampelinum (strain ATCC BAA-846 / DSM 112012 / S4) (Agrobacterium vitis (strain S4)).